We begin with the raw amino-acid sequence, 314 residues long: UDP-N-acetylenolpyruvoylglucosamine reductase (314 aa).

Residues 27–192 (KIGGKARYIV…LRAVFCLKFA (166 aa)) form the FAD-binding PCMH-type domain. R171 is a catalytic residue. S223 serves as the catalytic Proton donor. Residue E293 is part of the active site.

This sequence belongs to the MurB family. FAD is required as a cofactor.

The protein localises to the cytoplasm. It carries out the reaction UDP-N-acetyl-alpha-D-muramate + NADP(+) = UDP-N-acetyl-3-O-(1-carboxyvinyl)-alpha-D-glucosamine + NADPH + H(+). It functions in the pathway cell wall biogenesis; peptidoglycan biosynthesis. Its function is as follows. Cell wall formation. The chain is UDP-N-acetylenolpyruvoylglucosamine reductase from Caldicellulosiruptor bescii (strain ATCC BAA-1888 / DSM 6725 / KCTC 15123 / Z-1320) (Anaerocellum thermophilum).